The sequence spans 66 residues: Pteroicidin-alpha (66 aa).

The signal sequence occupies residues 1–22; sequence MKCIALFLVLSMVVLMAEPGEA. At Arg43 the chain carries Arginine amide; partial. A propeptide spanning residues 44-66 is cleaved from the precursor; the sequence is GKNRDMAEQQELERAFDRERAFA.

It belongs to the pleurocidin family. This peptide exists in N-terminally amidated and non-amidated forms. The amidated form is more active and has a greater alpha-helix content than the non-amidated form. Expressed in gill, skin, intestine, spleen, anterior kidney, and blood cells.

It localises to the secreted. In terms of biological role, the amidated peptide is bactericidal on human pathogens like S.aureus or E.coli, as well as on the fish pathogen A.salmonicida. May also be active against a variety of fungi. It can kill bacteria in less than 30 minutes (S.aureus) and 120 minutes (V.vulnificus). It induces hemolysis of erythrocytes from human and fishes (sea bass and lesser-spotted dogfish). Functionally, the non-amidated peptide only inhibits growth of human pathogens like S.aureus or E.coli, and the fish pathogen A.salmonicida. Induces hemolysis of erythrocytes from human and fishes (sea bass and lesser-spotted dogfish). This Pterois volitans (Red lionfish) protein is Pteroicidin-alpha.